An 870-amino-acid polypeptide reads, in one-letter code: Lon protease (870 aa).

Residues 1–270 (MPTNSYRFLV…KLYEHIHTFA (270 aa)) form the Lon N-terminal domain. An ATP-binding site is contributed by 454–461 (GPPGTGKT). The 180-residue stretch at 691 to 870 (SPQIGTVTGL…YQQIYDFIFK (180 aa)) folds into the Lon proteolytic domain. Residues Ser777 and Lys820 contribute to the active site.

This sequence belongs to the peptidase S16 family. As to quaternary structure, homohexamer. Organized in a ring with a central cavity.

The protein localises to the cytoplasm. The catalysed reaction is Hydrolysis of proteins in presence of ATP.. ATP-dependent serine protease that mediates the selective degradation of mutant and abnormal proteins as well as certain short-lived regulatory proteins. Required for cellular homeostasis and for survival from DNA damage and developmental changes induced by stress. Degrades polypeptides processively to yield small peptide fragments that are 5 to 10 amino acids long. Binds to DNA in a double-stranded, site-specific manner. The chain is Lon protease from Mesomycoplasma hyopneumoniae (strain 232) (Mycoplasma hyopneumoniae).